Reading from the N-terminus, the 348-residue chain is Phosphate acyltransferase (348 aa).

This sequence belongs to the PlsX family. As to quaternary structure, homodimer. Probably interacts with PlsY.

The protein localises to the cytoplasm. The catalysed reaction is a fatty acyl-[ACP] + phosphate = an acyl phosphate + holo-[ACP]. The protein operates within lipid metabolism; phospholipid metabolism. Its function is as follows. Catalyzes the reversible formation of acyl-phosphate (acyl-PO(4)) from acyl-[acyl-carrier-protein] (acyl-ACP). This enzyme utilizes acyl-ACP as fatty acyl donor, but not acyl-CoA. This chain is Phosphate acyltransferase, found in Oenococcus oeni (strain ATCC BAA-331 / PSU-1).